We begin with the raw amino-acid sequence, 344 residues long: S-adenosylmethionine:tRNA ribosyltransferase-isomerase (344 aa).

The protein belongs to the QueA family. In terms of assembly, monomer.

Its subcellular location is the cytoplasm. It carries out the reaction 7-aminomethyl-7-carbaguanosine(34) in tRNA + S-adenosyl-L-methionine = epoxyqueuosine(34) in tRNA + adenine + L-methionine + 2 H(+). It functions in the pathway tRNA modification; tRNA-queuosine biosynthesis. In terms of biological role, transfers and isomerizes the ribose moiety from AdoMet to the 7-aminomethyl group of 7-deazaguanine (preQ1-tRNA) to give epoxyqueuosine (oQ-tRNA). This is S-adenosylmethionine:tRNA ribosyltransferase-isomerase from Levilactobacillus brevis (strain ATCC 367 / BCRC 12310 / CIP 105137 / JCM 1170 / LMG 11437 / NCIMB 947 / NCTC 947) (Lactobacillus brevis).